A 1584-amino-acid polypeptide reads, in one-letter code: Sterile alpha motif domain-containing protein 9-like (1584 aa).

Residues 14–79 (WTKEHVKKWV…RSYNKLNSKS (66 aa)) form the SAM domain. The tract at residues 76–122 (NSKSPESDNHDPGQLDNSKPSKTEHQKNPKHTKKEEENSMSSNIDYD) is disordered. Residues 80 to 112 (PESDNHDPGQLDNSKPSKTEHQKNPKHTKKEEE) are compositionally biased toward basic and acidic residues.

Interacts with EEA1. As to expression, widely expressed in adult and fetal tissues. Expressed in the cerebellum. Variable expression in tumors. Down-regulated in breast cancer.

The protein localises to the early endosome. It localises to the mitochondrion. May be involved in endosome fusion. Mediates down-regulation of growth factor signaling via internalization of growth factor receptors. The polypeptide is Sterile alpha motif domain-containing protein 9-like (SAMD9L) (Homo sapiens (Human)).